Reading from the N-terminus, the 69-residue chain is Small cysteine-rich protein (69 aa).

Residues 1–19 form the signal peptide; the sequence is MKLQLCLVLLLLGVLYVQS. Residues 20-22 constitute a propeptide that is removed on maturation; that stretch reads VPE.

It belongs to the Cnidaria small cysteine-rich protein (SCRiP) family. delta subfamily. Post-translationally, contains 4 disulfide bonds.

It localises to the secreted. Its subcellular location is the nematocyst. Induces neurotoxic symptoms on zebrafish. Has also been claimed to be implied in calcification, but this function seems improbable. The polypeptide is Small cysteine-rich protein (Metridium senile (Brown sea anemone)).